A 232-amino-acid polypeptide reads, in one-letter code: Phosphoribosylformylglycinamidine synthase subunit PurQ (232 aa).

The region spanning 2–232 (KIAIIQFGGT…SMADYITENF (231 aa)) is the Glutamine amidotransferase type-1 domain. C86 functions as the Nucleophile in the catalytic mechanism. Residues H203 and E205 contribute to the active site.

In terms of assembly, part of the FGAM synthase complex composed of 1 PurL, 1 PurQ and 2 PurS subunits.

It localises to the cytoplasm. The enzyme catalyses N(2)-formyl-N(1)-(5-phospho-beta-D-ribosyl)glycinamide + L-glutamine + ATP + H2O = 2-formamido-N(1)-(5-O-phospho-beta-D-ribosyl)acetamidine + L-glutamate + ADP + phosphate + H(+). It carries out the reaction L-glutamine + H2O = L-glutamate + NH4(+). Its pathway is purine metabolism; IMP biosynthesis via de novo pathway; 5-amino-1-(5-phospho-D-ribosyl)imidazole from N(2)-formyl-N(1)-(5-phospho-D-ribosyl)glycinamide: step 1/2. Part of the phosphoribosylformylglycinamidine synthase complex involved in the purines biosynthetic pathway. Catalyzes the ATP-dependent conversion of formylglycinamide ribonucleotide (FGAR) and glutamine to yield formylglycinamidine ribonucleotide (FGAM) and glutamate. The FGAM synthase complex is composed of three subunits. PurQ produces an ammonia molecule by converting glutamine to glutamate. PurL transfers the ammonia molecule to FGAR to form FGAM in an ATP-dependent manner. PurS interacts with PurQ and PurL and is thought to assist in the transfer of the ammonia molecule from PurQ to PurL. This is Phosphoribosylformylglycinamidine synthase subunit PurQ from Methanosarcina mazei (strain ATCC BAA-159 / DSM 3647 / Goe1 / Go1 / JCM 11833 / OCM 88) (Methanosarcina frisia).